Consider the following 302-residue polypeptide: MMLSKKNSETLENFSEKLEVEGRSLWQDARRRFMHNRAAVASLIVLFLIALFVTVAPMLSQFTYFDTDWGMMSSAPDMASGHYFGTDSSGRDLLVRVAIGGRISLMVGIAAALVAVIVGTLYGSLSGYLGGKIDSVMMRLLEILNSFPFMFFVILLVTFFGQNILLIFVAIGMVSWLDMARIVRGQTLSLKRKEFIEAAQVGGVSTASIVIRHIVPNVLGVVVVYASLLVPSMILFESFLSFLGLGTQEPLSSWGALLSDGANSMEVSPWLLLFPAGFLVVTLFCFNFIGDGLRDALDPKDR.

Residues 1–39 are Cytoplasmic-facing; sequence MMLSKKNSETLENFSEKLEVEGRSLWQDARRRFMHNRAA. A helical membrane pass occupies residues 40–62; that stretch reads VASLIVLFLIALFVTVAPMLSQF. Topologically, residues 63 to 102 are periplasmic; sequence TYFDTDWGMMSSAPDMASGHYFGTDSSGRDLLVRVAIGGR. One can recognise an ABC transmembrane type-1 domain in the interval 101–290; the sequence is GRISLMVGIA…VTLFCFNFIG (190 aa). A helical membrane pass occupies residues 103–125; it reads ISLMVGIAAALVAVIVGTLYGSL. At 126–137 the chain is on the cytoplasmic side; it reads SGYLGGKIDSVM. A helical transmembrane segment spans residues 138–160; the sequence is MRLLEILNSFPFMFFVILLVTFF. Residues 161-163 are Periplasmic-facing; sequence GQN. Residues 164–183 traverse the membrane as a helical segment; it reads ILLIFVAIGMVSWLDMARIV. The Cytoplasmic portion of the chain corresponds to 184-213; sequence RGQTLSLKRKEFIEAAQVGGVSTASIVIRH. A helical membrane pass occupies residues 214 to 236; the sequence is IVPNVLGVVVVYASLLVPSMILF. The Periplasmic portion of the chain corresponds to 237-267; it reads ESFLSFLGLGTQEPLSSWGALLSDGANSMEV. Residues 268 to 290 form a helical membrane-spanning segment; that stretch reads SPWLLLFPAGFLVVTLFCFNFIG. Over 291–302 the chain is Cytoplasmic; the sequence is DGLRDALDPKDR.

The protein belongs to the binding-protein-dependent transport system permease family. OppBC subfamily. In terms of assembly, the complex is composed of two ATP-binding proteins (OppD and OppF), two transmembrane proteins (OppB and OppC) and a solute-binding protein (OppA).

It localises to the cell inner membrane. Part of the ABC transporter complex OppABCDF involved in the uptake of oligopeptides, including the cell wall murein tripeptide L-alanyl-gamma-D-glutamyl-meso-diaminopimelate. Responsible for the translocation of the substrate across the membrane. Plays an important nutritional role and is involved in the recycling of cell wall peptides. In Salmonella typhimurium (strain LT2 / SGSC1412 / ATCC 700720), this protein is Oligopeptide transport system permease protein OppC.